Here is a 265-residue protein sequence, read N- to C-terminus: Phosphonates import ATP-binding protein PhnC 1 (265 aa).

The region spanning 7–252 (IEVSNLSKSF…KLNEIYGTAA (246 aa)) is the ABC transporter domain. ATP is bound at residue 39–46 (GASGSGKS).

It belongs to the ABC transporter superfamily. Phosphonates importer (TC 3.A.1.9.1) family. In terms of assembly, the complex is composed of two ATP-binding proteins (PhnC), two transmembrane proteins (PhnE) and a solute-binding protein (PhnD).

It is found in the cell inner membrane. The catalysed reaction is phosphonate(out) + ATP + H2O = phosphonate(in) + ADP + phosphate + H(+). Part of the ABC transporter complex PhnCDE involved in phosphonates import. Responsible for energy coupling to the transport system. The sequence is that of Phosphonates import ATP-binding protein PhnC 1 from Nostoc sp. (strain PCC 7120 / SAG 25.82 / UTEX 2576).